The following is a 345-amino-acid chain: Protein sdf-9 (345 aa).

The region spanning 33-284 is the Tyrosine-protein phosphatase domain; that stretch reads NRNRVVKIVP…SFIYEAVLDY (252 aa).

The protein belongs to the protein-tyrosine phosphatase family. Expressed in the 2 embryonic head hypodermal cells XXXL/R.

It localises to the cytoplasm. The protein resides in the cell membrane. In terms of biological role, together with eak-4 and phosphatase eak-6, negatively regulates dauer larva formation downstream of insulin-like receptor daf-2 and in parallel of age-1, pdk-1 and akt-1. The sequence is that of Protein sdf-9 from Caenorhabditis elegans.